A 151-amino-acid chain; its full sequence is UPAR/Ly6 domain-containing protein crok (151 aa).

Positions 1–23 (MKTLEKYILFAIVLCCLLQLGQA) are cleaved as a signal peptide. Residues 24 to 128 (IKCWDCRSDN…KDGCNSAGIH (105 aa)) lie on the Lumenal side of the membrane. 5 cysteine pairs are disulfide-bonded: Cys-26–Cys-68, Cys-29–Cys-37, Cys-51–Cys-85, Cys-100–Cys-114, and Cys-116–Cys-122. A glycan (N-linked (GlcNAc...) asparagine) is linked at Asn-43. A lipid anchor (GPI-anchor amidated serine) is attached at Ser-124. Residues 125 to 151 (AGIHRLGLMGVLTGTLLSVIVAHLLRQ) constitute a propeptide, removed in mature form. Residues 129–149 (RLGLMGVLTGTLLSVIVAHLL) form a helical membrane-spanning segment. Residues 150 to 151 (RQ) are Cytoplasmic-facing.

This sequence belongs to the quiver family.

The protein resides in the vesicle. It is found in the membrane. The protein localises to the endomembrane system. In terms of biological role, required for septate junction assembly, possibly by organizing the preassembly and transport of septate junction proteins including dlg1/disks large 1 and Nrx-IV/Neurexin-IV. Involved in paracellular barrier functions of trachea, hindgut and salivary gland mediated by epithelial cell septate junctions. This chain is UPAR/Ly6 domain-containing protein crok, found in Drosophila melanogaster (Fruit fly).